Reading from the N-terminus, the 425-residue chain is Perilipin-2 (425 aa).

N-acetylalanine is present on Ala-2. Ser-213 is subject to Phosphoserine. The residue at position 230 (Tyr-230) is a Phosphotyrosine.

Belongs to the perilipin family. As to quaternary structure, interacts with IRGC. Post-translationally, acylated; primarily with C14, C16 and C18 fatty acids. In terms of processing, phosphorylation at Tyr-230 by isoform 1 of CHKA (CHKalpha2) promotes dissociation from lipid droplets: dissociation is followed by recruitment of autophagosome machinery to lipid droplets and subsequent lipid droplet lipolysis. Polyubiquitination of Nt-acetylatable A-PLIN2 by MARCHF6 lead to degradation by 26S proteasomes. In terms of tissue distribution, adipose tissue specific. Expressed abundantly and preferentially in fat pads.

It localises to the membrane. The protein localises to the lipid droplet. Its function is as follows. Structural component of lipid droplets, which is required for the formation and maintenance of lipid storage droplets. In Mus musculus (Mouse), this protein is Perilipin-2.